The chain runs to 179 residues: Inosine/xanthosine triphosphatase (179 aa).

Residues 8-13 (TTNPAK) and 68-69 (EA) contribute to the substrate site. E68 contributes to the Mg(2+) binding site.

It belongs to the YjjX NTPase family. In terms of assembly, homodimer. It depends on Mg(2+) as a cofactor. Mn(2+) is required as a cofactor.

It carries out the reaction XTP + H2O = XDP + phosphate + H(+). The enzyme catalyses ITP + H2O = IDP + phosphate + H(+). Phosphatase that hydrolyzes non-canonical purine nucleotides such as XTP and ITP to their respective diphosphate derivatives. Probably excludes non-canonical purines from DNA/RNA precursor pool, thus preventing their incorporation into DNA/RNA and avoiding chromosomal lesions. The sequence is that of Inosine/xanthosine triphosphatase from Serratia proteamaculans (strain 568).